The primary structure comprises 140 residues: Protein SNA4 (140 aa).

Residues 1-8 (MCCYCVCC) lie on the Cytoplasmic side of the membrane. 5 S-palmitoyl cysteine lipidation sites follow: cysteine 2, cysteine 3, cysteine 5, cysteine 7, and cysteine 8. The helical transmembrane segment at 9–29 (TVSDFILYIVAFFFPPAAVLL) threads the bilayer. Over 30–41 (RSGPCSSDFLLN) the chain is Vacuolar. The helical transmembrane segment at 42 to 62 (VLLTLLGFLPGMLHAFYYITI) threads the bilayer. Over 63 to 140 (TSPLRNAEYV…LVESPPPYVP (78 aa)) the chain is Cytoplasmic. Positions 84-140 (RNVPSNRPQNSQTPQNRPQQGSSARNVYPSVETPLLQGAAPHDNKQSLVESPPPYVP) are disordered. Positions 85–108 (NVPSNRPQNSQTPQNRPQQGSSAR) are enriched in polar residues. Residue lysine 128 forms a Glycyl lysine isopeptide (Lys-Gly) (interchain with G-Cter in ubiquitin) linkage. Residue serine 134 is modified to Phosphoserine.

The protein belongs to the UPF0057 (PMP3) family.

The protein localises to the vacuole membrane. The sequence is that of Protein SNA4 (SNA4) from Saccharomyces cerevisiae (strain ATCC 204508 / S288c) (Baker's yeast).